The following is a 468-amino-acid chain: Chromosomal replication initiator protein DnaA (468 aa).

The segment at 1-84 (MSSSLWLQCM…RFEVGSRPVA (84 aa)) is domain I, interacts with DnaA modulators. The interval 81-113 (RPVAAPKPAPTRTPADVAAESSAPAQLQARKPV) is disordered. The interval 84-131 (AAPKPAPTRTPADVAAESSAPAQLQARKPVHKTWDDDAQAIADINHRS) is domain II. Residues 132 to 348 (NVNPKHKFNN…GALNRVIANA (217 aa)) form a domain III, AAA+ region region. ATP is bound by residues Gly176, Gly178, Lys179, and Thr180. The domain IV, binds dsDNA stretch occupies residues 349-468 (NFTGRPITID…YSNLIRTLSS (120 aa)).

It belongs to the DnaA family. As to quaternary structure, oligomerizes as a right-handed, spiral filament on DNA at oriC.

The protein resides in the cytoplasm. Functionally, plays an essential role in the initiation and regulation of chromosomal replication. ATP-DnaA binds to the origin of replication (oriC) to initiate formation of the DNA replication initiation complex once per cell cycle. Binds the DnaA box (a 9 base pair repeat at the origin) and separates the double-stranded (ds)DNA. Forms a right-handed helical filament on oriC DNA; dsDNA binds to the exterior of the filament while single-stranded (ss)DNA is stabiized in the filament's interior. The ATP-DnaA-oriC complex binds and stabilizes one strand of the AT-rich DNA unwinding element (DUE), permitting loading of DNA polymerase. After initiation quickly degrades to an ADP-DnaA complex that is not apt for DNA replication. Binds acidic phospholipids. The chain is Chromosomal replication initiator protein DnaA from Vibrio vulnificus (strain CMCP6).